We begin with the raw amino-acid sequence, 147 residues long: Large ribosomal subunit protein uL15 (147 aa).

Residues 1–46 (MSIRLENLSYTPGARKEKHRKGRGHAAGKGKQAGRGQSGQKKRSTV) form a disordered region. The span at 16–28 (KEKHRKGRGHAAG) shows a compositional bias: basic residues.

The protein belongs to the universal ribosomal protein uL15 family. Part of the 50S ribosomal subunit.

Binds to the 23S rRNA. This Mesomycoplasma hyopneumoniae (strain 7448) (Mycoplasma hyopneumoniae) protein is Large ribosomal subunit protein uL15.